The primary structure comprises 447 residues: Glutamate--tRNA ligase 1 (447 aa).

The 'HIGH' region signature appears at Pro10–Asn20. The 'KMSKS' region signature appears at Lys240–Arg244. Residue Lys243 participates in ATP binding.

The protein belongs to the class-I aminoacyl-tRNA synthetase family. Glutamate--tRNA ligase type 1 subfamily. As to quaternary structure, monomer.

Its subcellular location is the cytoplasm. The enzyme catalyses tRNA(Glu) + L-glutamate + ATP = L-glutamyl-tRNA(Glu) + AMP + diphosphate. Functionally, catalyzes the attachment of glutamate to tRNA(Glu) in a two-step reaction: glutamate is first activated by ATP to form Glu-AMP and then transferred to the acceptor end of tRNA(Glu). In Rickettsia felis (strain ATCC VR-1525 / URRWXCal2) (Rickettsia azadi), this protein is Glutamate--tRNA ligase 1.